A 77-amino-acid polypeptide reads, in one-letter code: Small ribosomal subunit protein uS17c (77 aa).

It belongs to the universal ribosomal protein uS17 family. In terms of assembly, part of the 30S ribosomal subunit.

It localises to the plastid. The protein resides in the chloroplast. Functionally, one of the primary rRNA binding proteins, it binds specifically to the 5'-end of 16S ribosomal RNA. In Cyanidium caldarium (Red alga), this protein is Small ribosomal subunit protein uS17c (rps17).